A 515-amino-acid polypeptide reads, in one-letter code: Envelope glycoprotein (515 aa).

Positions M1–T33 are cleaved as a signal peptide. The Extracellular segment spans residues W34–T435. Residues N129 and N203 are each glycosylated (N-linked (GlcNAc...) asparagine; by host). Residues C212–C215 carry the CXXC motif. 3 disulfide bridges follow: C212/C215, C212/C392, and C384/C391. N-linked (GlcNAc...) asparagine; by host glycans are attached at residues N230, N251, N256, N271, and N287. The segment at V304–V324 is fusion peptide. 2 coiled-coil regions span residues Q330–I376 and N388–W420. N-linked (GlcNAc...) asparagine; by host glycosylation occurs at N351. An immunosuppression region spans residues A365 to Q381. The short motif at C384–C392 is the CX6CC element. The N-linked (GlcNAc...) asparagine; by host glycan is linked to N398. Residues I436 to L456 traverse the membrane as a helical segment. The S-palmitoyl cysteine; by host moiety is linked to residue C455. The Cytoplasmic portion of the chain corresponds to I457–P515.

In terms of assembly, the mature envelope protein (Env) consists of a trimer of SU-TM heterodimers attached by a labile interchain disulfide bond. Post-translationally, specific enzymatic cleavages in vivo yield mature proteins. Envelope glycoproteins are synthesized as an inactive precursor that is N-glycosylated and processed likely by host cell furin or by a furin-like protease in the Golgi to yield the mature SU and TM proteins. The cleavage site between SU and TM requires the minimal sequence [KR]-X-[KR]-R. In terms of processing, the CXXC motif is highly conserved across a broad range of retroviral envelope proteins. It is thought to participate in the formation of a labile disulfide bond possibly with the CX6CC motif present in the transmembrane protein. Isomerization of the intersubunit disulfide bond to an SU intrachain disulfide bond is thought to occur upon receptor recognition in order to allow membrane fusion. The transmembrane protein is palmitoylated.

The protein localises to the virion membrane. Its subcellular location is the host cell membrane. Functionally, the surface protein (SU) attaches the virus to the host cell by binding to its receptor. This interaction triggers the refolding of the transmembrane protein (TM) and is thought to activate its fusogenic potential by unmasking its fusion peptide. Fusion occurs at the host cell plasma membrane. In terms of biological role, the transmembrane protein (TM) acts as a class I viral fusion protein. Under the current model, the protein has at least 3 conformational states: pre-fusion native state, pre-hairpin intermediate state, and post-fusion hairpin state. During viral and target cell membrane fusion, the coiled coil regions (heptad repeats) assume a trimer-of-hairpins structure, positioning the fusion peptide in close proximity to the C-terminal region of the ectodomain. The formation of this structure appears to drive apposition and subsequent fusion of viral and target cell membranes. Membranes fusion leads to delivery of the nucleocapsid into the cytoplasm. The polypeptide is Envelope glycoprotein (env) (Bos taurus (Bovine)).